Here is a 639-residue protein sequence, read N- to C-terminus: Threonine--tRNA ligase (639 aa).

Positions 1–61 (MIHITLPDGS…TQDSPLSIVT (61 aa)) constitute a TGS domain. The segment at 242–533 (DHRKLGRELD…LIEEHAGALP (292 aa)) is catalytic. Zn(2+) is bound by residues C333, H384, and H510.

The protein belongs to the class-II aminoacyl-tRNA synthetase family. In terms of assembly, homodimer. Zn(2+) serves as cofactor.

It localises to the cytoplasm. The enzyme catalyses tRNA(Thr) + L-threonine + ATP = L-threonyl-tRNA(Thr) + AMP + diphosphate + H(+). Functionally, catalyzes the attachment of threonine to tRNA(Thr) in a two-step reaction: L-threonine is first activated by ATP to form Thr-AMP and then transferred to the acceptor end of tRNA(Thr). Also edits incorrectly charged L-seryl-tRNA(Thr). In Acidovorax sp. (strain JS42), this protein is Threonine--tRNA ligase.